The sequence spans 78 residues: Small ribosomal subunit protein bS18 (78 aa).

The protein belongs to the bacterial ribosomal protein bS18 family. In terms of assembly, part of the 30S ribosomal subunit. Forms a tight heterodimer with protein bS6.

Binds as a heterodimer with protein bS6 to the central domain of the 16S rRNA, where it helps stabilize the platform of the 30S subunit. The polypeptide is Small ribosomal subunit protein bS18 (Geobacillus sp. (strain WCH70)).